Here is a 60-residue protein sequence, read N- to C-terminus: DNA gyrase inhibitor YacG (60 aa).

The Zn(2+) site is built by cysteine 15, cysteine 18, cysteine 30, and cysteine 34.

The protein belongs to the DNA gyrase inhibitor YacG family. As to quaternary structure, interacts with GyrB. The cofactor is Zn(2+).

Functionally, inhibits all the catalytic activities of DNA gyrase by preventing its interaction with DNA. Acts by binding directly to the C-terminal domain of GyrB, which probably disrupts DNA binding by the gyrase. The polypeptide is DNA gyrase inhibitor YacG (Bradyrhizobium diazoefficiens (strain JCM 10833 / BCRC 13528 / IAM 13628 / NBRC 14792 / USDA 110)).